The primary structure comprises 377 residues: NADH dehydrogenase [ubiquinone] 1 alpha subcomplex subunit 9, mitochondrial (377 aa).

The transit peptide at 1 to 35 (MAAAAQSRVVRVLSMSRSAITAIATSVCHGPPCRQ) directs the protein to the mitochondrion. Residue K175 is modified to N6-succinyllysine. Residues K189 and K370 each carry the N6-acetyllysine modification.

This sequence belongs to the complex I NDUFA9 subunit family. Complex I is composed of 45 different subunits. This a component of the hydrophobic protein fraction. Interacts with BLOC1S1. Interacts with SLC2A4. Interacts with CLOCK. Interacts with RAB5IF. Requires FAD as cofactor. In terms of processing, acetylated on lysine residues. BLOC1S1 is required for acetylation. Acetylated by CLOCK in a circadian manner.

It localises to the mitochondrion matrix. Functionally, accessory subunit of the mitochondrial membrane respiratory chain NADH dehydrogenase (Complex I), that is believed not to be involved in catalysis. Required for proper complex I assembly. Complex I functions in the transfer of electrons from NADH to the respiratory chain. The immediate electron acceptor for the enzyme is believed to be ubiquinone. The sequence is that of NADH dehydrogenase [ubiquinone] 1 alpha subcomplex subunit 9, mitochondrial (NDUFA9) from Homo sapiens (Human).